A 615-amino-acid chain; its full sequence is Dihydroxy-acid dehydratase (615 aa).

Asp81 provides a ligand contact to Mg(2+). Cys122 contributes to the [2Fe-2S] cluster binding site. 2 residues coordinate Mg(2+): Asp123 and Lys124. Lys124 carries the post-translational modification N6-carboxylysine. Cys195 provides a ligand contact to [2Fe-2S] cluster. Residue Glu491 participates in Mg(2+) binding. Catalysis depends on Ser517, which acts as the Proton acceptor.

It belongs to the IlvD/Edd family. Homodimer. Requires [2Fe-2S] cluster as cofactor. The cofactor is Mg(2+).

The enzyme catalyses (2R)-2,3-dihydroxy-3-methylbutanoate = 3-methyl-2-oxobutanoate + H2O. It catalyses the reaction (2R,3R)-2,3-dihydroxy-3-methylpentanoate = (S)-3-methyl-2-oxopentanoate + H2O. Its pathway is amino-acid biosynthesis; L-isoleucine biosynthesis; L-isoleucine from 2-oxobutanoate: step 3/4. It participates in amino-acid biosynthesis; L-valine biosynthesis; L-valine from pyruvate: step 3/4. Its function is as follows. Functions in the biosynthesis of branched-chain amino acids. Catalyzes the dehydration of (2R,3R)-2,3-dihydroxy-3-methylpentanoate (2,3-dihydroxy-3-methylvalerate) into 2-oxo-3-methylpentanoate (2-oxo-3-methylvalerate) and of (2R)-2,3-dihydroxy-3-methylbutanoate (2,3-dihydroxyisovalerate) into 2-oxo-3-methylbutanoate (2-oxoisovalerate), the penultimate precursor to L-isoleucine and L-valine, respectively. This Shewanella halifaxensis (strain HAW-EB4) protein is Dihydroxy-acid dehydratase.